Consider the following 89-residue polypeptide: Large ribosomal subunit protein eL34 (89 aa).

A disordered region spans residues 1–29 (MSAPRFRNGTFKRTLKRVPGGRKVEHYKK). Over residues 13–29 (RTLKRVPGGRKVEHYKK) the composition is skewed to basic residues.

This sequence belongs to the eukaryotic ribosomal protein eL34 family.

The protein is Large ribosomal subunit protein eL34 of Methanosphaera stadtmanae (strain ATCC 43021 / DSM 3091 / JCM 11832 / MCB-3).